The sequence spans 611 residues: Dihydroxy-acid dehydratase (611 aa).

D81 contacts Mg(2+). C122 provides a ligand contact to [2Fe-2S] cluster. Mg(2+) contacts are provided by D123 and K124. N6-carboxylysine is present on K124. A [2Fe-2S] cluster-binding site is contributed by C195. Residue E491 coordinates Mg(2+). Catalysis depends on S517, which acts as the Proton acceptor.

The protein belongs to the IlvD/Edd family. In terms of assembly, homodimer. The cofactor is [2Fe-2S] cluster. Mg(2+) serves as cofactor.

The enzyme catalyses (2R)-2,3-dihydroxy-3-methylbutanoate = 3-methyl-2-oxobutanoate + H2O. It catalyses the reaction (2R,3R)-2,3-dihydroxy-3-methylpentanoate = (S)-3-methyl-2-oxopentanoate + H2O. It participates in amino-acid biosynthesis; L-isoleucine biosynthesis; L-isoleucine from 2-oxobutanoate: step 3/4. The protein operates within amino-acid biosynthesis; L-valine biosynthesis; L-valine from pyruvate: step 3/4. Functions in the biosynthesis of branched-chain amino acids. Catalyzes the dehydration of (2R,3R)-2,3-dihydroxy-3-methylpentanoate (2,3-dihydroxy-3-methylvalerate) into 2-oxo-3-methylpentanoate (2-oxo-3-methylvalerate) and of (2R)-2,3-dihydroxy-3-methylbutanoate (2,3-dihydroxyisovalerate) into 2-oxo-3-methylbutanoate (2-oxoisovalerate), the penultimate precursor to L-isoleucine and L-valine, respectively. The chain is Dihydroxy-acid dehydratase from Histophilus somni (strain 129Pt) (Haemophilus somnus).